The sequence spans 966 residues: LRR receptor-like serine/threonine-protein kinase ERL1 (966 aa).

An N-terminal signal peptide occupies residues 1–25; the sequence is MKEKMQRMVLSLAMVGFMVFGVASA. Over 26–582 the chain is Extracellular; that stretch reads MNNEGKALMA…PLPKSRVFSR (557 aa). Residues 40-63 form an LRR 1 repeat; the sequence is FSNLVNMLLDWDDVHNSDLCSWRG. 2 N-linked (GlcNAc...) asparagine glycosylation sites follow: Asn-68 and Asn-77. LRR repeat units lie at residues 75–94, 95–118, 120–142, 143–166, 168–190, 192–214, 215–238, 239–261, 262–285, 286–311, 313–333, 334–357, 359–381, 383–404, 405–429, 431–453, 454–476, 478–500, 501–525, and 527–550; these read SLNL…IGDL, RNLQ…IGNC, SLVY…ISKL, KQLE…LTQI, NLKR…LYWN, VLQY…MCQL, TGLW…IGNC, TSFQ…NIGF, LQVA…IGLM, QALA…NLSF, GKLY…LGNM, SRLS…LGKL, QLFE…ISSC, ALNQ…AFRN, LGSL…LGHI, NLDK…LGDL, EHLL…EFGN, RSIQ…ELGQ, LQNL…LTNC, and TLVN…NFSR. Asn-226 and Asn-237 each carry an N-linked (GlcNAc...) asparagine glycan. N-linked (GlcNAc...) asparagine glycans are attached at residues Asn-308 and Asn-332. N-linked (GlcNAc...) asparagine glycosylation is present at Asn-377. N-linked (GlcNAc...) asparagine glycosylation is found at Asn-412, Asn-441, and Asn-460. Asn-532, Asn-537, and Asn-547 each carry an N-linked (GlcNAc...) asparagine glycan. Residues 583 to 603 traverse the membrane as a helical segment; the sequence is GALICIVLGVITLLCMIFLAV. Topologically, residues 604–966 are cytoplasmic; sequence YKSMQQKKIL…FREVISKSSI (363 aa). Phosphothreonine is present on residues Thr-637 and Thr-645. The Protein kinase domain occupies 648 to 921; the sequence is LNEKFIIGYG…RVLLSLVPSL (274 aa). ATP contacts are provided by residues 654 to 662 and Lys-676; that span reads IGYGASSTV. Phosphotyrosine occurs at positions 721 and 760. Residue Asp-773 is the Proton acceptor of the active site. Tyr-815 is modified (phosphotyrosine). Residue Thr-823 is modified to Phosphothreonine.

This sequence belongs to the protein kinase superfamily. Ser/Thr protein kinase family. In terms of assembly, homodimer and heterodimer with ERECTA and TMM. Interacts with EPF1 and EPF2. Interacts with SERK1, SERK2, SERK3/BAK1 and SERK4 in a EPF1-induced manner. In terms of tissue distribution, mostly expressed in developing organs, including bud clusters, flowers, siliques and young rosettes. Also detected in mature aboveground organs, such as leaves, stems and pedicels, but barely in roots.

It localises to the cell membrane. It carries out the reaction L-seryl-[protein] + ATP = O-phospho-L-seryl-[protein] + ADP + H(+). It catalyses the reaction L-threonyl-[protein] + ATP = O-phospho-L-threonyl-[protein] + ADP + H(+). Functionally, receptor kinase that regulates inflorescence architecture and organ shape as well as stomatal patterning, including density and clustering, together with ER and ERL2. Redundantly involved with ER in procambial development regulation. Forms a functional ligand-receptor pair with EPF1 (AC Q8S8I4). Forms a constitutive complex with TMM involved in the recognition of the stomatal regulatory peptides EPF1, EPF2 and EPFL9/STOMAGEN. This Arabidopsis thaliana (Mouse-ear cress) protein is LRR receptor-like serine/threonine-protein kinase ERL1.